The following is a 203-amino-acid chain: Guanylate kinase (203 aa).

Residues Gly-3–Thr-181 enclose the Guanylate kinase-like domain. Position 10 to 17 (Ala-10 to Ser-17) interacts with ATP.

Belongs to the guanylate kinase family.

It localises to the cytoplasm. It catalyses the reaction GMP + ATP = GDP + ADP. Essential for recycling GMP and indirectly, cGMP. The chain is Guanylate kinase from Xanthomonas axonopodis pv. citri (strain 306).